Reading from the N-terminus, the 318-residue chain is MLSFVLLLCVALVNAYSDPGACSGTCWAHDPNVIRRVSDGTYFRFSTGGGVHISSASAITGPWTDLGYALPNGSIVTVGNASNLWAPDVHYVDGTYYMYYASSTLGSRDSTIGVATSTTLEADSWTDHGEIGVTSSSSTPYNAIDPNWITIGSTPYLQFGSYWQGLYQVEMTDSLSASSSTPTNLAYNASGNHAIEASYLYEYGGYYYLTFSSGKAQGYTTSLPAQGDEYRIVVCRSKTGTGNFVDKDGVSCLNSGGTTVLASHDYVYGPGGQGIINTTSHGIVVYYHYANKNIGLAVDDYQFGWNTLTWTDGWPVVA.

An N-terminal signal peptide occupies residues 1-28 (MLSFVLLLCVALVNAYSDPGACSGTCWA). Residue Asp30 is the Proton acceptor of the active site. Residues Asn72, Asn80, and Asn188 are each glycosylated (N-linked (GlcNAc...) asparagine). Glu196 acts as the Proton donor in catalysis. N-linked (GlcNAc...) asparagine glycosylation occurs at Asn277.

Belongs to the glycosyl hydrolase 43 family.

The protein resides in the secreted. It catalyses the reaction Endohydrolysis of (1-&gt;5)-alpha-arabinofuranosidic linkages in (1-&gt;5)-arabinans.. It functions in the pathway glycan metabolism; L-arabinan degradation. In terms of biological role, endo-1,5-alpha-L-arabinanase involved in degradation of pectin. Its preferred substrate is linear 1,5-alpha-L-arabinan. The protein is Probable arabinan endo-1,5-alpha-L-arabinosidase C (abnC) of Aspergillus niger (strain ATCC MYA-4892 / CBS 513.88 / FGSC A1513).